The sequence spans 467 residues: Siroheme synthase 2 (467 aa).

Positions 1–204 are precorrin-2 dehydrogenase /sirohydrochlorin ferrochelatase; the sequence is MDYLPIFCQL…NDVALAERQI (204 aa). NAD(+) contacts are provided by residues 22 to 23 and 43 to 44; these read EI and CS. S128 is modified (phosphoserine). Residues 216-467 form a uroporphyrinogen-III C-methyltransferase region; that stretch reads GEVVLVGAGP…EPSQPLAQMA (252 aa). Position 225 (P225) interacts with S-adenosyl-L-methionine. The active-site Proton acceptor is the D248. Residue K270 is the Proton donor of the active site. S-adenosyl-L-methionine is bound by residues 301 to 303, I306, 331 to 332, M382, and G411; these read GGD and TA.

This sequence in the N-terminal section; belongs to the precorrin-2 dehydrogenase / sirohydrochlorin ferrochelatase family. In the C-terminal section; belongs to the precorrin methyltransferase family.

It catalyses the reaction uroporphyrinogen III + 2 S-adenosyl-L-methionine = precorrin-2 + 2 S-adenosyl-L-homocysteine + H(+). It carries out the reaction precorrin-2 + NAD(+) = sirohydrochlorin + NADH + 2 H(+). The catalysed reaction is siroheme + 2 H(+) = sirohydrochlorin + Fe(2+). Its pathway is cofactor biosynthesis; adenosylcobalamin biosynthesis; precorrin-2 from uroporphyrinogen III: step 1/1. The protein operates within cofactor biosynthesis; adenosylcobalamin biosynthesis; sirohydrochlorin from precorrin-2: step 1/1. It functions in the pathway porphyrin-containing compound metabolism; siroheme biosynthesis; precorrin-2 from uroporphyrinogen III: step 1/1. It participates in porphyrin-containing compound metabolism; siroheme biosynthesis; siroheme from sirohydrochlorin: step 1/1. Its pathway is porphyrin-containing compound metabolism; siroheme biosynthesis; sirohydrochlorin from precorrin-2: step 1/1. Functionally, multifunctional enzyme that catalyzes the SAM-dependent methylations of uroporphyrinogen III at position C-2 and C-7 to form precorrin-2 via precorrin-1. Then it catalyzes the NAD-dependent ring dehydrogenation of precorrin-2 to yield sirohydrochlorin. Finally, it catalyzes the ferrochelation of sirohydrochlorin to yield siroheme. The protein is Siroheme synthase 2 of Serratia proteamaculans (strain 568).